Consider the following 137-residue polypeptide: MVGVRLVFTNAFVVTVLLTLLLDVVVKPAEGQSSCSLSSRPHPRGICGSNLAGFRAFICSNQNSPSMVKRDAETGWLLPETMVKRNAETDLDDPLRNIKLSSESALTYLTKRQRTTNLVCECCFNYCTPDVVRKYCY.

The first 31 residues, 1–31, serve as a signal peptide directing secretion; sequence MVGVRLVFTNAFVVTVLLTLLLDVVVKPAEG. Q32 carries the pyrrolidone carboxylic acid modification. Intrachain disulfides connect C47–C123, C59–C136, and C122–C127. The propeptide at 71–83 is C-beta peptide like; it reads DAETGWLLPETMV. Residues 86–110 constitute a propeptide, C-alpha peptide like; that stretch reads NAETDLDDPLRNIKLSSESALTYLT. A Pyrrolidone carboxylic acid modification is found at Q113.

It belongs to the insulin family. As to quaternary structure, heterodimer of a B chain and an A chain linked by two disulfide bonds. Expressed in the cerebral light-green cells which are giant neuroendocrines cells involved in the control of growth.

The protein localises to the cytoplasmic vesicle. It is found in the secretory vesicle. The protein is Molluscan insulin-related peptide 2 of Lymnaea stagnalis (Great pond snail).